Reading from the N-terminus, the 1080-residue chain is Zorya protein ZorD (1080 aa).

Positions 596–779 constitute a Helicase ATP-binding domain; that stretch reads LRSPEETAGC…WSLFDFAQPG (184 aa). A Helicase C-terminal domain is found at 904–1069; sequence KLNWLLKILA…DMLCATPDLS (166 aa).

Its function is as follows. Component of antiviral defense system Zorya type I, composed of ZorA, ZorB, ZorC and ZorD. Expression of Zorya type I in E.coli (strain MG1655) confers 10,000-fold resistance to phage SECphi27, 100-fold resistance to lambda, and 10-fold resistance to T7. While most T7 infected Zorya-containing cells undergo abortive infection, a minority produce viable phage progeny. These eventually accumulate to a high multiplicity of infection, leading to culture collapse by 2 hours after initial infection. ZorA and ZorB probably assemble in the cell inner membrane and exert their effect there. This may have ATPase activity. The chain is Zorya protein ZorD from Escherichia coli O139:H28 (strain E24377A / ETEC).